We begin with the raw amino-acid sequence, 277 residues long: Large ribosomal subunit protein uL2cz/uL2cy (277 aa).

2 disordered regions span residues 1 to 31 (MAIHLYKTSTPSTRNGAVDSQAKSNTRNTRK) and 227 to 277 (NPVD…RRSK).

The protein belongs to the universal ribosomal protein uL2 family. Part of the 50S ribosomal subunit.

It is found in the plastid. The protein resides in the chloroplast. This is Large ribosomal subunit protein uL2cz/uL2cy (rpl2-A) from Manihot esculenta (Cassava).